The primary structure comprises 790 residues: Cadherin-6 (790 aa).

A signal peptide spans 1-30 (MRTYHCFWLLFWAGQPHQSFLTLLSKRTSG). The propeptide occupies 31–53 (FPEKEKVLVLSGNSRRDLSRSKR). Cadherin domains lie at 54–159 (SWMW…EPMF), 160–268 (TKDV…PPRF), 269–383 (PQST…PPVF), 384–486 (SRPA…DNAP), and 487–608 (EFAM…LIHP). Topologically, residues 54 to 615 (SWMWNQFFLL…IHPTGLSTGA (562 aa)) are extracellular. N-linked (GlcNAc...) asparagine glycosylation is found at asparagine 165 and asparagine 255. Residues 261–289 (VNDNPPRFPQSTYQFRAPESTPPDSPIGR) are disordered. 3 N-linked (GlcNAc...) asparagine glycosylation sites follow: asparagine 437, asparagine 455, and asparagine 536. A helical transmembrane segment spans residues 616–636 (LIAILLCIIILLVTVVLFAAL). Residues 637–790 (RRQRKKEPLI…YGSMDSDKDS (154 aa)) lie on the Cytoplasmic side of the membrane.

The protein localises to the cell membrane. Its function is as follows. Cadherins are calcium-dependent cell adhesion proteins. They preferentially interact with themselves in a homophilic manner in connecting cells; cadherins may thus contribute to the sorting of heterogeneous cell types. The sequence is that of Cadherin-6 (CDH6) from Gallus gallus (Chicken).